Here is a 186-residue protein sequence, read N- to C-terminus: Probable peptidoglycan L,D-endopeptidase MepK (186 aa).

An N-terminal signal peptide occupies residues 1-30 (MNYVDQNKRKWLSLGGIALGISILPNSVLA). Zn(2+) contacts are provided by His134, Asp141, and His174.

Belongs to the peptidase M15 family. Requires Zn(2+) as cofactor.

It participates in cell wall biogenesis; cell wall polysaccharide biosynthesis. Its function is as follows. L,D-endopeptidase that cleaves meso-diaminopimelic acid (mDAP)-mDAP cross-links in peptidoglycan. It works in conjunction with other elongation-specific D,D-endopeptidases to make space for efficient incorporation of nascent peptidoglycan strands into the sacculus and thus enable cell wall expansion. The chain is Probable peptidoglycan L,D-endopeptidase MepK from Haemophilus influenzae (strain ATCC 51907 / DSM 11121 / KW20 / Rd).